The following is a 1537-amino-acid chain: Leucine-rich repeat-containing protein 7 (1537 aa).

LRR repeat units follow at residues 23–44, 47–68, 70–91, 93–114, 116–137, 139–161, 162–183, 185–206, 208–229, 231–253, 254–275, 277–298, 300–321, 323–344, 346–367, 369–391, and 392–413; these read IISV…VFNF, TLEE…LFNC, ALRK…IASL, NLKE…IKCC, CLTI…FTQL, NLTQ…GRLV, KLRI…MHKL, QLER…LDQI, NLRE…IGKL, MLVY…SGCE, ALED…IGLL, KLTT…IGNL, LLEE…IGYL, SLRT…IGSC, NVTV…IGQM, KLRV…TKLK, and ELAA…QTEA. 3 positions are modified to phosphoserine: S439, S441, and S443. Over residues 663-676 the composition is skewed to basic and acidic residues; sequence KKESTDESEVDKTH. 4 disordered regions span residues 663–709, 730–759, 786–810, and 824–892; these read KKES…VGSL, FPQP…DRLP, AENA…RRPL, and EQST…SPGV. The segment covering 677-709 has biased composition (polar residues); sequence CLNNSVSSGTYSDYSPSQASSGSSNTRVKVGSL. Positions 790-804 are enriched in low complexity; the sequence is NSNPLLSSKSRSTSS. Phosphothreonine is present on T831. S850 carries the post-translational modification Phosphoserine. The span at 859-871 shows a compositional bias: low complexity; the sequence is PSKLETTPTTSPL. T865 carries the post-translational modification Phosphothreonine. A Phosphoserine modification is found at S869. Residues 872–882 are compositionally biased toward basic and acidic residues; sequence PERKEHIKEST. 3 positions are modified to phosphoserine: S947, S949, and S1118. Residues 1136 to 1159 form a disordered region; the sequence is ELPPTDRYGRPPYRGGLDRQSSVT. At R1149 the chain carries Omega-N-methylarginine. S1233 bears the Phosphoserine mark. Disordered stretches follow at residues 1234–1265 and 1331–1360; these read DYNL…SCGK and QKTP…YPLG. Residues 1243 to 1263 are compositionally biased toward basic and acidic residues; the sequence is KPSDNSDLKTRPTPVKGEESC. Polar residues predominate over residues 1332–1354; that stretch reads KTPSQQSNILDNGQEDVSPSGQW. S1335 and S1439 each carry phosphoserine. One can recognise a PDZ domain in the interval 1445–1535; sequence EQFCVRIEKN…TVDLVIQREL (91 aa).

This sequence belongs to the LAP (LRR and PDZ) protein family. Interacts with CNKSR2 and DLG4. Interacts with CTNND2/Catenin delta-2. Forms a complex with N-cadherin through CTNND2. Interacts with CAMK2A. As to expression, brain-specific. Isoform 3 is ubiquitously expressed.

Its subcellular location is the cytoplasm. The protein resides in the postsynaptic density. Required for normal synaptic spine architecture and function. Necessary for DISC1 and GRM5 localization to postsynaptic density complexes and for both N-methyl D-aspartate receptor-dependent and metabotropic glutamate receptor-dependent long term depression. This chain is Leucine-rich repeat-containing protein 7 (LRRC7), found in Homo sapiens (Human).